A 658-amino-acid polypeptide reads, in one-letter code: Alkyldihydroxyacetonephosphate synthase, peroxisomal (658 aa).

Disordered regions lie at residues 1–41 (MAEA…LRVL) and 63–86 (AASA…IPKK). The N-terminal 58 residues, 1 to 58 (MAEAAAAAGGTGLGAGASYGSAADRDRDPDPDRAGRRLRVLSGHLLGRPREALSTNEC), are a transit peptide targeting the peroxisome. The segment covering 23–35 (ADRDRDPDPDRAG) has biased composition (basic and acidic residues). The span at 63 to 77 (AASAATAAPTATPAA) shows a compositional bias: low complexity. Ser65 carries the phosphoserine modification. Thr74 is subject to Phosphothreonine. An N6-acetyllysine modification is found at Lys102. An FAD-binding PCMH-type domain is found at 202 to 384 (FERIPDIVLW…TEATIKIRPV (183 aa)). FAD is bound by residues 234 to 240 (PIGGGTS), 303 to 309 (DSLEFST), and 316 to 319 (TRAS). Lys347 is modified (N6-acetyllysine). An FAD-binding site is contributed by 368 to 374 (EGTLGVI). Arg515 serves as a coordination point for substrate. The active-site Proton donor/acceptor is the Tyr578. Important for enzyme activity regions lie at residues 615–617 (HHH) and 654–658 (NRNLL).

This sequence belongs to the FAD-binding oxidoreductase/transferase type 4 family. As to quaternary structure, homodimer. FAD is required as a cofactor.

The protein localises to the peroxisome membrane. Its subcellular location is the peroxisome. It catalyses the reaction a long chain fatty alcohol + a 1-acylglycerone 3-phosphate = a 1-O-alkylglycerone 3-phosphate + a long-chain fatty acid + H(+). It carries out the reaction hexadecan-1-ol + 1-hexadecanoylglycerone 3-phosphate = 1-O-hexadecylglycerone 3-phosphate + hexadecanoate + H(+). The enzyme catalyses 1-hexadecanoylglycerone 3-phosphate + a long-chain fatty acid = a 1-acylglycerone 3-phosphate + hexadecanoate. It participates in glycerolipid metabolism; ether lipid biosynthesis. Catalyzes the exchange of the acyl chain in acyl-dihydroxyacetonephosphate (acyl-DHAP) for a long chain fatty alcohol, yielding the first ether linked intermediate, i.e. alkyl-dihydroxyacetonephosphate (alkyl-DHAP), in the pathway of ether lipid biosynthesis. This Homo sapiens (Human) protein is Alkyldihydroxyacetonephosphate synthase, peroxisomal (AGPS).